A 452-amino-acid polypeptide reads, in one-letter code: uncharacterized protein (452 aa).

This is an uncharacterized protein from Acanthamoeba polyphaga (Amoeba).